We begin with the raw amino-acid sequence, 433 residues long: Divalent metal cation transporter MntH (433 aa).

11 consecutive transmembrane segments (helical) span residues 32-52 (LIFAGPAVVASIAYMDPGNFA), 62-82 (GYDLLWVVLLASLIAMLFQGL), 101-121 (TLPPALTIPMWIISEIAAMAT), 131-151 (IGIALLAHLPLMAGMAITGIV), 168-188 (LVIGALVGVIALCYLAELLIV), 209-229 (ALTIAVGIVGATVMPHALFLH), 256-276 (VLAALGVAGMVNMAMVAMAAG), 296-316 (SPLLGAGAAVIFLISLLASGV), 345-365 (ALTMIPGFVVIGLGVNPTRAL), 366-386 (VLSQVVLSLALPVPMLALLWF), and 401-421 (ITAIAAIGGAIVILGLNVILL).

It belongs to the NRAMP family.

It localises to the cell inner membrane. H(+)-stimulated, divalent metal cation uptake system. The chain is Divalent metal cation transporter MntH from Acidiphilium cryptum (strain JF-5).